Consider the following 999-residue polypeptide: Hypoxia up-regulated protein 1 (999 aa).

A signal peptide spans 1–32; that stretch reads MADKVRRQRPRRRVCWALVAVLLADLLALSDT. N-linked (GlcNAc...) asparagine glycosylation is found at N155, N222, and N515. S567 carries the post-translational modification Phosphoserine. A disordered region spans residues 578–694; sequence GNTISSLFGG…KKQKPARKRR (117 aa). A glycan (N-linked (GlcNAc...) asparagine) is linked at N596. Composition is skewed to basic and acidic residues over residues 611 to 626 and 641 to 672; these read GSKDEPGEQVELKEEA and PKGDATPEGEKATEKENGDKSEAQKPSEKAEA. N-linked (GlcNAc...) asparagine glycans are attached at residues N830, N862, and N869. K883 carries the post-translational modification N6-acetyllysine. Positions 909–999 are disordered; that stretch reads AKFTKPRPRP…QKRPLKNDEL (91 aa). N-linked (GlcNAc...) asparagine glycans are attached at residues N922 and N931. Residues 996-999 carry the Prevents secretion from ER motif; the sequence is NDEL.

Belongs to the heat shock protein 70 family. In terms of assembly, part of a large chaperone multiprotein complex comprising DNAJB11, HSP90B1, HSPA5, HYOU, PDIA2, PDIA4, PDIA6, PPIB, SDF2L1, UGGT1 and very small amounts of ERP29, but not, or at very low levels, CALR nor CANX. In terms of tissue distribution, highly expressed in tissues that contain well-developed endoplasmic reticulum and synthesize large amounts of secretory proteins. Highly expressed in liver and pancreas and lower expression in brain and kidney. Also expressed in macrophages within aortic atherosclerotic plaques, and in breast cancers.

Its subcellular location is the endoplasmic reticulum lumen. In terms of biological role, has a pivotal role in cytoprotective cellular mechanisms triggered by oxygen deprivation. Promotes HSPA5/BiP-mediated ATP nucleotide exchange and thereby activates the unfolded protein response (UPR) pathway in the presence of endoplasmic reticulum stress. May play a role as a molecular chaperone and participate in protein folding. This Homo sapiens (Human) protein is Hypoxia up-regulated protein 1 (HYOU1).